The chain runs to 153 residues: MAVLVNNLQEEISVEENLLKLVESVVKVSLESEGYSPDAEVGLIFVDDNYIRSLNAEYRGIDKATDVLSFALNEGEEMPEEEEAEDLLGDIVISLPTAQRQAAEYGHSFNREVAYLTAHGSLHLLGYDHMTEEDRQVMRQKEEGILERLGINR.

Residues His-119, His-123, and His-129 each contribute to the Zn(2+) site.

This sequence belongs to the endoribonuclease YbeY family. Requires Zn(2+) as cofactor.

Its subcellular location is the cytoplasm. In terms of biological role, single strand-specific metallo-endoribonuclease involved in late-stage 70S ribosome quality control and in maturation of the 3' terminus of the 16S rRNA. This is Endoribonuclease YbeY from Desulforamulus reducens (strain ATCC BAA-1160 / DSM 100696 / MI-1) (Desulfotomaculum reducens).